The following is a 568-amino-acid chain: MRASLFPLSTSKETPADAEIVSHQLMLRAGMIRKLAAGLYTWTPLGLRVLRKVEQIVREEMDRAGAHELLMPAVQPAELWQESTRWDKYGPELLRLKDRHERDFCFGPTHEEVITDYVRREVKSYRQLPLNLYQIQTKFRDEIRPRFGVMRAREFLMKDAYSFHLDDDCLARTYQVMYETYTRIFERTGLVFRAVAADSGNIGGSVSHEFHVLAESGEDAVAFSDESDYAANVELAEAVAPAGEAPPPAETMRRVDTPGARTIDDLVRDYGLPIEKTVKTLVVHGADGGLVALLVRGDHSLNDVKATTLPQVAEPLVMAGEEEIRAAVGAGPGSLGPVELPLPCVVDRSVAVMSDFAAGANQDDAHYFGINWGRDVALPEVADLREVVAGDPSPDGRGTLEIARGIEVGHIFQLGREYSEKMKATVLNEAGDAQTVTMGCYGIGVSRVVAAAIEQNHDDNGIIWPAPIAPFQLALVPIGMNRSEAVTEQAEKLYAELQAEGVEVFFDDRDARPGVKFADMELIGIPHRLVIGDRGLKNGVVEYRGRRDSESTDVPLAELSAFLRERLG.

The protein belongs to the class-II aminoacyl-tRNA synthetase family. ProS type 1 subfamily. Homodimer.

It localises to the cytoplasm. The catalysed reaction is tRNA(Pro) + L-proline + ATP = L-prolyl-tRNA(Pro) + AMP + diphosphate. Its function is as follows. Catalyzes the attachment of proline to tRNA(Pro) in a two-step reaction: proline is first activated by ATP to form Pro-AMP and then transferred to the acceptor end of tRNA(Pro). As ProRS can inadvertently accommodate and process non-cognate amino acids such as alanine and cysteine, to avoid such errors it has two additional distinct editing activities against alanine. One activity is designated as 'pretransfer' editing and involves the tRNA(Pro)-independent hydrolysis of activated Ala-AMP. The other activity is designated 'posttransfer' editing and involves deacylation of mischarged Ala-tRNA(Pro). The misacylated Cys-tRNA(Pro) is not edited by ProRS. This Alkalilimnicola ehrlichii (strain ATCC BAA-1101 / DSM 17681 / MLHE-1) protein is Proline--tRNA ligase.